The primary structure comprises 204 residues: Holliday junction branch migration complex subunit RuvA (204 aa).

A domain I region spans residues 1–67; that stretch reads MIAFLSGHLV…ETELVLYGFG (67 aa). The segment at 68-146 is domain II; the sequence is SPAERDLFVE…HWRQGMGVAD (79 aa). Residues 147–157 are flexible linker; sequence QPLAGGPPMPI. The interval 157–204 is domain III; it reads IREEVEMALLALGYSTQEIQAALQALPTHPRPTEDWLRDAITYLSQQP.

The protein belongs to the RuvA family. Homotetramer. Forms an RuvA(8)-RuvB(12)-Holliday junction (HJ) complex. HJ DNA is sandwiched between 2 RuvA tetramers; dsDNA enters through RuvA and exits via RuvB. An RuvB hexamer assembles on each DNA strand where it exits the tetramer. Each RuvB hexamer is contacted by two RuvA subunits (via domain III) on 2 adjacent RuvB subunits; this complex drives branch migration. In the full resolvosome a probable DNA-RuvA(4)-RuvB(12)-RuvC(2) complex forms which resolves the HJ.

The protein localises to the cytoplasm. The RuvA-RuvB-RuvC complex processes Holliday junction (HJ) DNA during genetic recombination and DNA repair, while the RuvA-RuvB complex plays an important role in the rescue of blocked DNA replication forks via replication fork reversal (RFR). RuvA specifically binds to HJ cruciform DNA, conferring on it an open structure. The RuvB hexamer acts as an ATP-dependent pump, pulling dsDNA into and through the RuvAB complex. HJ branch migration allows RuvC to scan DNA until it finds its consensus sequence, where it cleaves and resolves the cruciform DNA. In Synechococcus sp. (strain JA-2-3B'a(2-13)) (Cyanobacteria bacterium Yellowstone B-Prime), this protein is Holliday junction branch migration complex subunit RuvA.